The sequence spans 687 residues: Pre-mRNA-splicing factor CLF1 (687 aa).

HAT repeat units follow at residues 45–77 (EYQR…FEIE), 79–111 (HDMR…AELK), 113–145 (KCIN…VEES), 147–178 (NNVE…FEIR), 180–211 (KNWN…FENR), 213–247 (GNTE…AKLV), 251–283 (AHWE…LKAG), 300–332 (TISY…LISE), 337–369 (QIMQ…LWMR), 383–416 (LEEE…FLIR), 451–483 (KEFD…LEEN), 525–557 (QEFE…YQTS), and 629–661 (LDQE…YIFP).

The protein belongs to the crooked-neck family. Belongs to the NTC complex (or PRP19-associated complex), composed of at least CEF1, CLF1, ISY1, NTC20, SNT309, SYF1, SYF2, and PRP19. The NTC complex associates with the spliceosome after the release of the U1 and U4 snRNAs and forms the CWC spliceosome subcomplex (or CEF1-associated complex) reminiscent of a late-stage spliceosome composed also of the U2, U5 and U6 snRNAs and at least BUD13, BUD31, BRR2, CDC40, CUS1, CWC2, CWC15, CWC21, CWC22, CWC23, CWC24, CWC25, CWC27, ECM2, HSH155, IST3, LEA1, MSL1, PRP8, PRP9, PRP11, PRP21, PRP22, PRP45, PRP46, SLU7, SMB1, SMD1, SMD2, SMD3, SMX2, SMX3, SNU114, SPP2, RSE1 and YJU2. Interacts with CEF1, ISY1, MUD2, NTC20, PRP22, PRP40, PRP46, SYF1, SYF2, and the ORC2 subunit of the origin recognition complex.

It is found in the nucleus. Its function is as follows. Involved in pre-mRNA splicing and cell cycle progression. Required for the spliceosome assembly by promoting the functional integration of the U4/U6.U5 tri-snRNP particle into the U1-, U2-dependent pre-spliceosome. Also recruits PRP19 to the spliceosome, as a component of the NTC complex (or PRP19-associated complex). The association of the NTC complex to the spliceosome mediates conformational rearrangement or stabilizes the structure of the spliceosome after U4 snRNA dissociation, which leads to spliceosome maturation. Required for initiation of the DNA replication by binding the RNA replication origins, probably through its interaction with the origin recognition complex (ORC). The polypeptide is Pre-mRNA-splicing factor CLF1 (CLF1) (Saccharomyces cerevisiae (strain ATCC 204508 / S288c) (Baker's yeast)).